Reading from the N-terminus, the 277-residue chain is MIILIYLFLLLWEDTQGWGFKDGIFHNSIWLERAAGVYHREARSGKYKLTYAEAKAVCEFEGGHLATYKQLEAARKIGFHVCAAGWMAKGRVGYPIVKPGPNCGFGKTGIIDYGIRLNRSERWDAYCYNPHAKECGGVFTDPKQIFKSPGFPNEYEDNQICYWHIRLKYGQRIHLSFLDFDLEDDPGCLADYVEIYDSYDDVHGFVGRYCGDELPDDIISTGNVMTLKFLSDASVTAGGFQIKYVAMDPVSKSSQGKNTSTTSTGNKNFLAGRFSHL.

The N-terminal stretch at 1 to 17 (MIILIYLFLLLWEDTQG) is a signal peptide. The Link domain occupies 36–129 (GVYHREARSG…SERWDAYCYN (94 aa)). Cystine bridges form between cysteine 58–cysteine 127, cysteine 82–cysteine 103, and cysteine 135–cysteine 161. Asparagine 118 carries N-linked (GlcNAc...) asparagine glycosylation. The 113-residue stretch at 135–247 (CGGVFTDPKQ…GGFQIKYVAM (113 aa)) folds into the CUB domain. Ca(2+)-binding residues include glutamate 183, aspartate 191, aspartate 232, serine 234, and valine 235. A disulfide bridge connects residues cysteine 188 and cysteine 210. Asparagine 258 carries an N-linked (GlcNAc...) asparagine glycan.

As to quaternary structure, interacts (via Link domain) with inter-alpha-inhibitor (I-alpha-I) component bikunin. Interacts with ITIH2/HC2; this interaction is required for transesterification of the HC to hyaluronan. Interacts (via Link and CUB domains) with ITIH1. Chondroitin sulfate may be required for the stability of the complex. Interacts (via Link domain) with various C-X-C and C-C chemokines including PF4, CXCL8, CXCL11, CXCL12, CCL2, CCL7, CCL19, CCL21, and CCL27; this interaction interferes with chemokine binding to glycosaminoglycans. Interacts (primarily via Link domain) with BMP2; this interaction is inhibited by hyaluronan. Interacts (via both Link and CUB domains) with TNFSF11. Interacts (via CUB domain) with FN1 (via type III repeats 9-14); this interaction enhances fibronectin fibril assembly. TNFAIP6 may act as a bridging molecule between FN1 and THBS1. N-glycosylated. As to expression, expressed in airway epithelium and submucosal gland (at protein level). Colocalizes with bikunin at the ciliary border. Present in bronchoalveolar lavage fluid (at protein level). Expressed in mesenchymal stem cells. Found in the synovial fluid of patients with rheumatoid arthritis.

It is found in the secreted. In terms of biological role, major regulator of extracellular matrix organization during tissue remodeling. Catalyzes the transfer of a heavy chain (HC) from inter-alpha-inhibitor (I-alpha-I) complex to hyaluronan. Cleaves the ester bond between the C-terminus of the HC and GalNAc residue of the chondroitin sulfate chain in I-alpha-I complex followed by transesterification of the HC to hyaluronan. In the process, potentiates the antiprotease function of I-alpha-I complex through release of free bikunin. Acts as a catalyst in the formation of hyaluronan-HC oligomers and hyaluronan-rich matrix surrounding the cumulus cell-oocyte complex, a necessary step for oocyte fertilization. Assembles hyaluronan in pericellular matrices that serve as platforms for receptor clustering and signaling. Enables binding of hyaluronan deposited on the surface of macrophages to LYVE1 on lymphatic endothelium and facilitates macrophage extravasation. Alters hyaluronan binding to functionally latent CD44 on vascular endothelium, switching CD44 into an active state that supports leukocyte rolling. Modulates the interaction of chemokines with extracellular matrix components and proteoglycans on endothelial cell surface, likely preventing chemokine gradient formation. In a negative feedback mechanism, may limit excessive neutrophil recruitment at inflammatory sites by antagonizing the association of CXCL8 with glycosaminoglycans on vascular endothelium. Has a role in osteogenesis and bone remodeling. Inhibits BMP2-dependent differentiation of mesenchymal stem cell to osteoblasts. Protects against bone erosion during inflammation by inhibiting TNFSF11/RANKL-dependent osteoclast activation. This Homo sapiens (Human) protein is Tumor necrosis factor-inducible gene 6 protein (TNFAIP6).